The sequence spans 156 residues: Endoribonuclease YbeY (156 aa).

Zn(2+)-binding residues include His122, His126, and His132.

Belongs to the endoribonuclease YbeY family. Zn(2+) is required as a cofactor.

It localises to the cytoplasm. Functionally, single strand-specific metallo-endoribonuclease involved in late-stage 70S ribosome quality control and in maturation of the 3' terminus of the 16S rRNA. This is Endoribonuclease YbeY from Bacillus cereus (strain ZK / E33L).